Reading from the N-terminus, the 280-residue chain is HCLS1-associated protein X-1 (280 aa).

Ser-2 bears the N-acetylserine mark. Residues 2 to 45 are required for localization in mitochondria; the sequence is SVFDLFRGFFGFPGPRSHRDPFFGGMTRDDDDDDDDDDEAEEDR. Disordered regions lie at residues 12 to 70 and 100 to 263; these read GFPG…SFSP and TLPS…SALD. Residues 30-43 are compositionally biased toward acidic residues; that stretch reads DDDDDDDDDDEAEE. Residues 115–280 are involved in HCLS1 binding; that stretch reads TPGERLREGQ…LLLGRWFRSR (166 aa). Composition is skewed to basic and acidic residues over residues 116 to 125 and 134 to 154; these read PGERLREGQT and PDSH…KPES. Residues 176–207 form an involved in CASP9 binding region; it reads VSPHSRAKEDKDLDSQVSQEGLGPLLQPQPKS. Positions 177–248 are involved in GNA13 binding; the sequence is SPHSRAKEDK…TTVTHQEAHD (72 aa). Residues 184 to 280 form a required for localization in sarcoplasmic reticulum region; it reads EDKDLDSQVS…LLLGRWFRSR (97 aa). Positions 185-280 are involved in PKD2 binding; it reads DKDLDSQVSQ…LLLGRWFRSR (96 aa). Residues Ser-190 and Ser-193 each carry the phosphoserine modification. Residues 204-226 are involved in PLN binding; the sequence is QPKSYFKSISVTKITKPDGTVEE. The tract at residues 204 to 246 is involved in ATP2A2 binding; sequence QPKSYFKSISVTKITKPDGTVEERRTVVDSEGRRETTVTHQEA. The tract at residues 211–280 is mediates interaction with UCP3; it reads SISVTKITKP…LLLGRWFRSR (70 aa). Residues 218–256 show a composition bias toward basic and acidic residues; sequence TKPDGTVEERRTVVDSEGRRETTVTHQEAHDSSRSDPDS. The tract at residues 271–280 is required for ITGB6 binding; the sequence is LLLGRWFRSR.

The protein belongs to the HAX1 family. Interacts with ABCB1, ABCB4 and ABCB11. Directly associates with HCLS1/HS1, through binding to its N-terminal region. Interacts with CTTN. Interacts with PKD2. Interacts with GNA13. Interacts with CASP9. Interacts with ITGB6. Interacts with PLN and ATP2A2; these interactions are inhibited by calcium. Interacts with GRB7. Interacts (via C-terminus) with XIAP/BIRC4 (via BIR 2 domain and BIR 3 domain) and this interaction blocks ubiquitination of XIAP/BIRC4. Interacts with TPC2. Interacts with KCNC3. Interacts with XPO1. Interacts with RNF217. Interacts with UCP3; the interaction is direct and calcium-dependent. Interacts with MAPRE2; this interaction regulates cell migration in keratinocytes. In terms of tissue distribution, ubiquitous, with highest levels in kidney and liver (at protein level).

The protein resides in the mitochondrion matrix. It is found in the endoplasmic reticulum. The protein localises to the nucleus membrane. It localises to the cytoplasmic vesicle. Its subcellular location is the cytoplasm. The protein resides in the cell cortex. It is found in the cell membrane. The protein localises to the sarcoplasmic reticulum. It localises to the P-body. Its subcellular location is the nucleus. Functionally, recruits the Arp2/3 complex to the cell cortex and regulates reorganization of the cortical actin cytoskeleton via its interaction with KCNC3 and the Arp2/3 complex. Slows down the rate of inactivation of KCNC3 channels. Promotes GNA13-mediated cell migration. Involved in the clathrin-mediated endocytosis pathway. May be involved in internalization of ABC transporters such as ABCB11. May inhibit CASP9 and CASP3. Promotes cell survival. May regulate intracellular calcium pools. The protein is HCLS1-associated protein X-1 (Hax1) of Mus musculus (Mouse).